An 83-amino-acid chain; its full sequence is Small ribosomal subunit protein bS16 (83 aa).

Belongs to the bacterial ribosomal protein bS16 family.

This chain is Small ribosomal subunit protein bS16, found in Pseudomonas fluorescens (strain Pf0-1).